A 204-amino-acid polypeptide reads, in one-letter code: Dephospho-CoA kinase (204 aa).

Residues 12–204 enclose the DPCK domain; it reads RIGVTGGIAS…AWRDQISSIC (193 aa). Residue 20–25 coordinates ATP; the sequence is ASGKSS.

It belongs to the CoaE family.

Its subcellular location is the cytoplasm. It catalyses the reaction 3'-dephospho-CoA + ATP = ADP + CoA + H(+). It participates in cofactor biosynthesis; coenzyme A biosynthesis; CoA from (R)-pantothenate: step 5/5. Catalyzes the phosphorylation of the 3'-hydroxyl group of dephosphocoenzyme A to form coenzyme A. The sequence is that of Dephospho-CoA kinase from Prochlorococcus marinus (strain MIT 9313).